A 105-amino-acid chain; its full sequence is Cuticle protein AMP1A (105 aa).

The tract at residues 1–21 (DRDAQTLTDERSDQGDGNFRY) is disordered. The Chitin-binding type R&amp;R domain occupies 16–81 (DGNFRYEFET…PSSDLLPVGP (66 aa)).

Arthrodial membrane.

The polypeptide is Cuticle protein AMP1A (Homarus americanus (American lobster)).